A 347-amino-acid chain; its full sequence is G-protein coupled receptor homolog U12 (347 aa).

Helical transmembrane passes span 36-56 (GITLTTSIPMIIIVVTTMILY), 67-87 (FYVITLFASDFVLMWCVFFMT), 103-124 (LVYFIYHAVCSYSISMLAIIAT), 147-167 (IGILLLASSMCAIPTALFVKT), 194-214 (IVFSFIWGVLPTMVFSFFYVI), and 236-256 (ILLLSFLLIQIPYIAILICEI). A disulfide bond links Cys101 and Cys176. A disordered region spans residues 321-347 (QKRKDSDASEHDQNSKSKASVEKNQPL). Over residues 322–341 (KRKDSDASEHDQNSKSKASV) the composition is skewed to basic and acidic residues.

This sequence belongs to the G-protein coupled receptor 1 family.

The protein resides in the membrane. Functionally, probable G-protein coupled receptor. The protein is G-protein coupled receptor homolog U12 (U12) of Homo sapiens (Human).